The chain runs to 522 residues: Glucose-1-phosphate adenylyltransferase large subunit, chloroplastic/amyloplastic (522 aa).

Residues 1-62 (MSSMQFSSVL…RGPAATGAQC (62 aa)) constitute a chloroplast transit peptide. Residues 28–42 (SERLKVGDSSSIRHE) show a composition bias toward basic and acidic residues. The tract at residues 28-54 (SERLKVGDSSSIRHERASRRMCNGGRG) is disordered.

Belongs to the bacterial/plant glucose-1-phosphate adenylyltransferase family. As to quaternary structure, heterotetramer. As to expression, abundantly expressed in the whole grains, a slightly less abundant expression is seen in leaves, while a low level expression is seen in the roots. A greater expression is seen in the endosperm than in the embryo and pericarp layers.

Its subcellular location is the plastid. It localises to the chloroplast. The protein resides in the amyloplast. The catalysed reaction is alpha-D-glucose 1-phosphate + ATP + H(+) = ADP-alpha-D-glucose + diphosphate. Its pathway is glycan biosynthesis; starch biosynthesis. With respect to regulation, insensitive to 3'phosphoglycerate and orthophosphate. Functionally, this protein plays a role in synthesis of starch. It catalyzes the synthesis of the activated glycosyl donor, ADP-glucose from Glc-1-P and ATP. The protein is Glucose-1-phosphate adenylyltransferase large subunit, chloroplastic/amyloplastic (AGP-L) of Triticum aestivum (Wheat).